The sequence spans 446 residues: Transcriptional adapter 2-alpha (446 aa).

Residues 12 to 69 (FDKPPCRGCSSYLTEPYVKCAECGPPPFLLCLQCFTRGFEYKKHQSDHTYEIMTSDFP) form a ZZ-type zinc finger. 8 residues coordinate Zn(2+): Cys-17, Cys-20, Cys-31, Cys-34, Cys-42, Cys-45, His-55, and His-59. The SANT domain maps to 70 to 122 (VLDPNWTAQEEMALLEAVMDCGFGNWQDVANQMCTKSKEECEKHYMKHFINNP). Residues 345-375 (DIDSGPTPAAPIPSNSGRRSAPPLNLTGLPG) form a disordered region. The region spanning 359–446 (NSGRRSAPPL…LIREGYITKA (88 aa)) is the SWIRM domain. A DNA-binding region spans residues 429-438 (KTRKIYDFLI).

It localises to the nucleus. It is found in the chromosome. Component of some complex with histone acetyltransferase activity. Required for the function of some acidic activation domains, which activate transcription from a distant site. Binds double-stranded DNA. Binds dinucleosomes, probably at the linker region between neighboring nucleosomes. Plays a role in chromatin remodeling. The chain is Transcriptional adapter 2-alpha (TADA2A) from Gallus gallus (Chicken).